A 296-amino-acid polypeptide reads, in one-letter code: Ribosomal RNA small subunit methyltransferase A (296 aa).

Residues Asn31, Leu33, Gly58, Glu79, Asp111, and Asn136 each coordinate S-adenosyl-L-methionine.

The protein belongs to the class I-like SAM-binding methyltransferase superfamily. rRNA adenine N(6)-methyltransferase family. RsmA subfamily.

Its subcellular location is the cytoplasm. It carries out the reaction adenosine(1518)/adenosine(1519) in 16S rRNA + 4 S-adenosyl-L-methionine = N(6)-dimethyladenosine(1518)/N(6)-dimethyladenosine(1519) in 16S rRNA + 4 S-adenosyl-L-homocysteine + 4 H(+). Functionally, specifically dimethylates two adjacent adenosines (A1518 and A1519) in the loop of a conserved hairpin near the 3'-end of 16S rRNA in the 30S particle. May play a critical role in biogenesis of 30S subunits. In Lactobacillus johnsonii (strain CNCM I-12250 / La1 / NCC 533), this protein is Ribosomal RNA small subunit methyltransferase A.